Reading from the N-terminus, the 216-residue chain is Adenylate kinase (216 aa).

ATP is bound at residue 10-15; that stretch reads GAGKGT. Residues 30–59 form an NMP region; sequence STGDIFRAAIKNQTPMGVEAKKFIDKGELV. AMP is bound by residues Thr-31, Arg-36, 57-59, 85-88, and Gln-92; these read ELV and GFPR. An LID region spans residues 126–164; that stretch reads GRFICRNCGTTYHRLYNPTKVEGTCDVCGGHDFYQRDDD. Arg-127 is an ATP binding site. Cys-130 and Cys-133 together coordinate Zn(2+). ATP is bound at residue 136–137; that stretch reads TY. Zn(2+) contacts are provided by Cys-150 and Cys-153. Positions 161 and 172 each coordinate AMP. Gln-200 contributes to the ATP binding site.

The protein belongs to the adenylate kinase family. In terms of assembly, monomer.

The protein localises to the cytoplasm. It catalyses the reaction AMP + ATP = 2 ADP. Its pathway is purine metabolism; AMP biosynthesis via salvage pathway; AMP from ADP: step 1/1. In terms of biological role, catalyzes the reversible transfer of the terminal phosphate group between ATP and AMP. Plays an important role in cellular energy homeostasis and in adenine nucleotide metabolism. This Limosilactobacillus fermentum (strain NBRC 3956 / LMG 18251) (Lactobacillus fermentum) protein is Adenylate kinase.